The following is a 245-amino-acid chain: MRYIGKWMMLGALVSSSVFADVKVNIHRDVAPLVVNGEKVGFFISKKSVLDFDNGLNQLVVRVEKLIDNNQGEKEKFNSKPVIITFKASDRELDLFVDSVISRSKDAEEFELNPFFILKDKNGDPIQIMKQEILPNGGGITRDYETEVYRYNKKNNIIIASEKLSQSIAEQPIVEMEKGVEMVQYWYEKASNEDKKQFASLAFENRKSEIAKQNTKSQELDMLVYWFNQTSENGRKNIINWIMNN.

Positions 1–20 are cleaved as a signal peptide; the sequence is MRYIGKWMMLGALVSSSVFA.

This sequence belongs to the UPF0319 family.

This chain is UPF0319 protein VV0984, found in Vibrio vulnificus (strain YJ016).